We begin with the raw amino-acid sequence, 701 residues long: ER-retained PMA1-suppressing protein 1 (701 aa).

The signal sequence occupies residues 1-27 (MKMNLKRLVVTFFSCITFLLKFTIAAA). The Thioredoxin 1 domain occupies 28-142 (EPPEGFPEPL…LIAFARRESM (115 aa)). Cys-60 and Cys-63 form a disulfide bridge. Asn-85 is a glycosylation site (N-linked (GlcNAc...) asparagine). A disulfide bridge links Cys-200 with Cys-203. N-linked (GlcNAc...) asparagine glycans are attached at residues Asn-264, Asn-299, and Asn-370. The region spanning 408 to 446 (PTFFMFKDGDPISYVFPGYSTTEMRNIDAIMDWVKKYSN) is the Thioredoxin 2 domain. A helical membrane pass occupies residues 646–666 (IIHGNGMPGYLIVIVLFIAIL).

This sequence belongs to the protein disulfide isomerase family. Interacts with mutated PMA1-D378N but not wild type PMA1. Interacts with EUG1, KAR2, MPD1 and PDI1.

It is found in the endoplasmic reticulum membrane. It carries out the reaction Catalyzes the rearrangement of -S-S- bonds in proteins.. Acts as a membrane-bound chaperone in endoplasmic reticulum quality control. Probably facilitates presentation of substrate to membrane-bound components of the degradation machinery. In Saccharomyces cerevisiae (strain ATCC 204508 / S288c) (Baker's yeast), this protein is ER-retained PMA1-suppressing protein 1 (EPS1).